Reading from the N-terminus, the 367-residue chain is MQTLKVELGERSYPIHIGEGLLDQPELLTPHIVGRQVAIVSNTTVAPLYLERLTQTLAGYNVLPIVLPDGEAFKNWETLQTIFDGLLTARHDRRTTVIALGGGVIGDMAGFAAACYQRGVNFIQIPTTLLSQVDSSVGGKTGINHPLGKNMVGAFYQPSVVLIDTASLNTLPERELSAGLAEVIKYGLICDEPFLTWLEEHVDALRGLDQAALTVAIERSCAAKALVVGADERESGVRATLNLGHTFGHAIETHMGYGVWLHGEAVAAGTVMALEMSSRLGWISTQERDRGIRLFQRAGLPVVPPQDMTQDNFLEHMAIDKKVIDGRLRLVLLRRMGEAVITDEYPKEVLQATLVADYRALVDQLRG.

NAD(+)-binding positions include 69–74 (DGEAFK), 103–107 (GVIGD), 127–128 (TT), K140, and K149. Positions 182, 245, and 262 each coordinate Zn(2+).

Belongs to the sugar phosphate cyclases superfamily. Dehydroquinate synthase family. Requires Co(2+) as cofactor. The cofactor is Zn(2+). NAD(+) serves as cofactor.

It localises to the cytoplasm. The catalysed reaction is 7-phospho-2-dehydro-3-deoxy-D-arabino-heptonate = 3-dehydroquinate + phosphate. It functions in the pathway metabolic intermediate biosynthesis; chorismate biosynthesis; chorismate from D-erythrose 4-phosphate and phosphoenolpyruvate: step 2/7. Its function is as follows. Catalyzes the conversion of 3-deoxy-D-arabino-heptulosonate 7-phosphate (DAHP) to dehydroquinate (DHQ). The protein is 3-dehydroquinate synthase of Pseudomonas syringae pv. syringae (strain B728a).